The following is a 268-amino-acid chain: MGFMKHNIVDNVAFSNKLRHVNPKLKVIFALSLLLISVFSTSFIVPLIIFFINSILLLFKAKVPKKIYAVFVGIPLGFGILNLVIFAFLFGTVEWFKINVFGFEIPVYKDGIELGLLLFGRMLGGVSSMLFLAFTTPMVELFYIFRELKMPDVLVDMMMLIYRYIFVLYEEYEKMKFAQESRLGTSNLKSTYKSLGALAAHLFIRAWEKGEKLNITMMSRCYDGKIKLLQTIENPSIKYILFIAIFDIFLIILAYLTKDFTLTSYIKI.

The next 4 helical transmembrane spans lie at 32–52, 70–90, 125–145, and 237–257; these read SLLL…IFFI, VFVG…AFLF, GVSS…FYIF, and IKYI…AYLT.

The protein belongs to the CbiQ family.

It is found in the cell membrane. This is an uncharacterized protein from Methanocaldococcus jannaschii (strain ATCC 43067 / DSM 2661 / JAL-1 / JCM 10045 / NBRC 100440) (Methanococcus jannaschii).